A 427-amino-acid chain; its full sequence is UPF0229 protein bll6755 (427 aa).

Residues 86–107 (DYLQRSGQGSAKDSGPGEGDSE) form a disordered region.

Belongs to the UPF0229 family.

The protein is UPF0229 protein bll6755 of Bradyrhizobium diazoefficiens (strain JCM 10833 / BCRC 13528 / IAM 13628 / NBRC 14792 / USDA 110).